The chain runs to 458 residues: Elongation factor 1-alpha (458 aa).

Residue G2 is modified to N,N,N-trimethylglycine. K3 carries the post-translational modification N6,N6-dimethyllysine; alternate. K3 carries the post-translational modification N6-methyllysine; alternate. The tr-type G domain maps to 5–240 (KTHVNVVVIG…DAIEPPQRPT (236 aa)). Positions 14–21 (GHVDSGKS) are G1. 14–21 (GHVDSGKS) serves as a coordination point for GTP. K30 is modified (N6-methyllysine). Residues 70–74 (GITID) are G2. At K79 the chain carries N6,N6,N6-trimethyllysine. The tract at residues 91 to 94 (DAPG) is G3. Residues 91–95 (DAPGH) and 153–156 (NKMD) contribute to the GTP site. The segment at 153 to 156 (NKMD) is G4. Residues 192-194 (SGW) form a G5 region. Residue K316 is modified to N6,N6-dimethyllysine; alternate. The residue at position 316 (K316) is an N6-methyllysine; alternate. K390 carries the post-translational modification N6-methyllysine.

The protein belongs to the TRAFAC class translation factor GTPase superfamily. Classic translation factor GTPase family. EF-Tu/EF-1A subfamily.

The protein localises to the cytoplasm. The protein operates within protein biosynthesis; polypeptide chain elongation. In terms of biological role, this protein promotes the GTP-dependent binding of aminoacyl-tRNA to the A-site of ribosomes during protein biosynthesis. This is Elongation factor 1-alpha (TEF1) from Meyerozyma guilliermondii (strain ATCC 6260 / CBS 566 / DSM 6381 / JCM 1539 / NBRC 10279 / NRRL Y-324) (Yeast).